Reading from the N-terminus, the 173-residue chain is Large ribosomal subunit protein uL16 (173 aa).

The protein belongs to the universal ribosomal protein uL16 family.

This chain is Large ribosomal subunit protein uL16, found in Methanosarcina acetivorans (strain ATCC 35395 / DSM 2834 / JCM 12185 / C2A).